The sequence spans 426 residues: 3-phosphoshikimate 1-carboxyvinyltransferase (426 aa).

3 residues coordinate 3-phosphoshikimate: Lys-22, Ser-23, and Arg-27. A phosphoenolpyruvate-binding site is contributed by Lys-22. Phosphoenolpyruvate-binding residues include Gly-96 and Arg-124. 3-phosphoshikimate is bound by residues Ser-170, Ser-171, Gln-172, Ser-198, Asp-314, Asn-337, and Lys-341. Residue Gln-172 coordinates phosphoenolpyruvate. Asp-314 (proton acceptor) is an active-site residue. Phosphoenolpyruvate-binding residues include Arg-345, Arg-387, and Lys-412.

This sequence belongs to the EPSP synthase family. Monomer.

The protein resides in the cytoplasm. The catalysed reaction is 3-phosphoshikimate + phosphoenolpyruvate = 5-O-(1-carboxyvinyl)-3-phosphoshikimate + phosphate. The protein operates within metabolic intermediate biosynthesis; chorismate biosynthesis; chorismate from D-erythrose 4-phosphate and phosphoenolpyruvate: step 6/7. Functionally, catalyzes the transfer of the enolpyruvyl moiety of phosphoenolpyruvate (PEP) to the 5-hydroxyl of shikimate-3-phosphate (S3P) to produce enolpyruvyl shikimate-3-phosphate and inorganic phosphate. This chain is 3-phosphoshikimate 1-carboxyvinyltransferase, found in Shewanella baltica (strain OS185).